Here is a 99-residue protein sequence, read N- to C-terminus: Nucleoid-associated protein UPA3_0088 (99 aa).

The protein belongs to the YbaB/EbfC family. Homodimer.

Its subcellular location is the cytoplasm. The protein resides in the nucleoid. Binds to DNA and alters its conformation. May be involved in regulation of gene expression, nucleoid organization and DNA protection. The sequence is that of Nucleoid-associated protein UPA3_0088 from Ureaplasma parvum serovar 3 (strain ATCC 27815 / 27 / NCTC 11736).